We begin with the raw amino-acid sequence, 616 residues long: Probable methyltransferase PMT2 (616 aa).

At 1–13 (MALKSSSADGKTR) the chain is on the cytoplasmic side. The chain crosses the membrane as a helical; Signal-anchor for type II membrane protein span at residues 14-34 (SSVQIFIVFSLCCFFYILGAW). At 35-616 (QRSGFGKGDS…YWVTNSTSTH (582 aa)) the chain is on the lumenal side. Residues Asn-205 and Asn-611 are each glycosylated (N-linked (GlcNAc...) asparagine).

It belongs to the methyltransferase superfamily.

It localises to the golgi apparatus membrane. This is Probable methyltransferase PMT2 from Arabidopsis thaliana (Mouse-ear cress).